Reading from the N-terminus, the 238-residue chain is Urease subunit alpha (238 aa).

The tract at residues 1–102 (MKLTPKELDK…LVTVHTPIEA (102 aa)) is urease gamma. Residues 103–238 (NGKLVPGELF…DDNYVKTIKE (136 aa)) form a urease beta region.

It in the N-terminal section; belongs to the urease gamma subunit family. In the C-terminal section; belongs to the urease beta subunit family. Heterohexamer of 3 UreA (alpha) and 3 UreB (beta) subunits. Four heterohexamers assemble to form a 16 nm dodecameric complex.

The enzyme catalyses urea + 2 H2O + H(+) = hydrogencarbonate + 2 NH4(+). It participates in nitrogen metabolism; urea degradation; CO(2) and NH(3) from urea (urease route): step 1/1. The chain is Urease subunit alpha from Helicobacter pylori (strain J99 / ATCC 700824) (Campylobacter pylori J99).